The sequence spans 201 residues: MNILVIKSSVNEKKGSYSSHLSDLFIKFYLEIHPEDQIEVYDLNQFGLANTNLTMKNFEDKTFYQKAESDFWINKLRNADKIVFSTSMTNFNYSATTKNFFDAITVPNKTFLLDKNTGKYTGLLKNIQNVQILTAQGAPLGWYPFGNHSALIKQIFEFLGAKVRSDFFVLDGTKVAPNNQKPIADFVAQRQNQIKILAENF.

FMN-binding positions include Ser-9 and 16-18 (SYS).

This sequence belongs to the azoreductase type 1 family. Homodimer. FMN serves as cofactor.

It catalyses the reaction 2 a quinone + NADH + H(+) = 2 a 1,4-benzosemiquinone + NAD(+). The catalysed reaction is N,N-dimethyl-1,4-phenylenediamine + anthranilate + 2 NAD(+) = 2-(4-dimethylaminophenyl)diazenylbenzoate + 2 NADH + 2 H(+). Functionally, quinone reductase that provides resistance to thiol-specific stress caused by electrophilic quinones. In terms of biological role, also exhibits azoreductase activity. Catalyzes the reductive cleavage of the azo bond in aromatic azo compounds to the corresponding amines. The chain is FMN-dependent NADH:quinone oxidoreductase from Mesomycoplasma hyopneumoniae (strain 7448) (Mycoplasma hyopneumoniae).